Consider the following 706-residue polypeptide: Elongation factor G (706 aa).

Positions L15–V291 constitute a tr-type G domain. Residues A24–T31, D91–H95, and N145–D148 contribute to the GTP site.

This sequence belongs to the TRAFAC class translation factor GTPase superfamily. Classic translation factor GTPase family. EF-G/EF-2 subfamily.

The protein localises to the cytoplasm. Catalyzes the GTP-dependent ribosomal translocation step during translation elongation. During this step, the ribosome changes from the pre-translocational (PRE) to the post-translocational (POST) state as the newly formed A-site-bound peptidyl-tRNA and P-site-bound deacylated tRNA move to the P and E sites, respectively. Catalyzes the coordinated movement of the two tRNA molecules, the mRNA and conformational changes in the ribosome. The protein is Elongation factor G of Leptospira interrogans serogroup Icterohaemorrhagiae serovar copenhageni (strain Fiocruz L1-130).